The chain runs to 104 residues: Succinate dehydrogenase assembly factor 4, mitochondrial (104 aa).

A mitochondrion-targeting transit peptide spans 1–30 (MVSTTLSVSRMTFVWRAARPSLLNHSLRKM). A disordered region spans residues 29-104 (KMSYQEGKPE…WERKGRCIDF (76 aa)). Basic and acidic residues-rich tracts occupy residues 63–83 (EREPLQKFPDDVNPVTKEKGG) and 91–104 (RYGDWERKGRCIDF).

Belongs to the SDHAF4 family. Interacts with Sdha in its FAD-bound form.

Its subcellular location is the mitochondrion matrix. In terms of biological role, plays an essential role in the assembly of succinate dehydrogenase (SDH), an enzyme complex (also referred to as respiratory complex II) that is a component of both the tricarboxylic acid (TCA) cycle and the mitochondrial electron transport chain, and which couples the oxidation of succinate to fumarate with the reduction of ubiquinone (coenzyme Q) to ubiquinol. Binds to the flavoprotein subunit Sdha in its FAD-bound form, blocking the generation of excess reactive oxygen species (ROS) and facilitating its assembly with the iron-sulfur protein subunit Sdhb into the SDH catalytic dimer. This Mus musculus (Mouse) protein is Succinate dehydrogenase assembly factor 4, mitochondrial.